A 555-amino-acid chain; its full sequence is Glutamate--tRNA ligase (555 aa).

The 'HIGH' region signature appears at 103–113 (PNPSGPLHIGH).

It belongs to the class-I aminoacyl-tRNA synthetase family. Glutamate--tRNA ligase type 2 subfamily.

It localises to the cytoplasm. The catalysed reaction is tRNA(Glu) + L-glutamate + ATP = L-glutamyl-tRNA(Glu) + AMP + diphosphate. Functionally, catalyzes the attachment of glutamate to tRNA(Glu) in a two-step reaction: glutamate is first activated by ATP to form Glu-AMP and then transferred to the acceptor end of tRNA(Glu). The polypeptide is Glutamate--tRNA ligase (Methanobrevibacter smithii (strain ATCC 35061 / DSM 861 / OCM 144 / PS)).